A 210-amino-acid chain; its full sequence is Ribonuclease HII (210 aa).

Positions 16–207 constitute an RNase H type-2 domain; sequence AIVVGVDEVG…VKKCIISTKN (192 aa). Asp-22, Glu-23, and Asp-116 together coordinate a divalent metal cation.

This sequence belongs to the RNase HII family. It depends on Mn(2+) as a cofactor. Mg(2+) serves as cofactor.

It localises to the cytoplasm. The catalysed reaction is Endonucleolytic cleavage to 5'-phosphomonoester.. Endonuclease that specifically degrades the RNA of RNA-DNA hybrids. This Anaplasma phagocytophilum (strain HZ) protein is Ribonuclease HII.